We begin with the raw amino-acid sequence, 210 residues long: Histidine biosynthesis bifunctional protein HisIE (210 aa).

Residues 1–106 (MTNYKIDFSK…SCFNTEVPFS (106 aa)) form a phosphoribosyl-AMP cyclohydrolase region. The tract at residues 107–210 (VQTLAQTVQD…KGERQNIEQW (104 aa)) is phosphoribosyl-ATP pyrophosphohydrolase.

This sequence in the N-terminal section; belongs to the PRA-CH family. It in the C-terminal section; belongs to the PRA-PH family.

It is found in the cytoplasm. The enzyme catalyses 1-(5-phospho-beta-D-ribosyl)-ATP + H2O = 1-(5-phospho-beta-D-ribosyl)-5'-AMP + diphosphate + H(+). It catalyses the reaction 1-(5-phospho-beta-D-ribosyl)-5'-AMP + H2O = 1-(5-phospho-beta-D-ribosyl)-5-[(5-phospho-beta-D-ribosylamino)methylideneamino]imidazole-4-carboxamide. It participates in amino-acid biosynthesis; L-histidine biosynthesis; L-histidine from 5-phospho-alpha-D-ribose 1-diphosphate: step 2/9. The protein operates within amino-acid biosynthesis; L-histidine biosynthesis; L-histidine from 5-phospho-alpha-D-ribose 1-diphosphate: step 3/9. This is Histidine biosynthesis bifunctional protein HisIE (hisI) from Staphylococcus aureus (strain COL).